The primary structure comprises 945 residues: Isoleucine--tRNA ligase (945 aa).

A 'HIGH' region motif is present at residues proline 66–histidine 76. Position 581 (glutamate 581) interacts with L-isoleucyl-5'-AMP. The short motif at lysine 622–serine 626 is the 'KMSKS' region element. Lysine 625 contacts ATP. Positions 908, 911, 928, and 931 each coordinate Zn(2+).

Belongs to the class-I aminoacyl-tRNA synthetase family. IleS type 1 subfamily. As to quaternary structure, monomer. The cofactor is Zn(2+).

Its subcellular location is the cytoplasm. The catalysed reaction is tRNA(Ile) + L-isoleucine + ATP = L-isoleucyl-tRNA(Ile) + AMP + diphosphate. In terms of biological role, catalyzes the attachment of isoleucine to tRNA(Ile). As IleRS can inadvertently accommodate and process structurally similar amino acids such as valine, to avoid such errors it has two additional distinct tRNA(Ile)-dependent editing activities. One activity is designated as 'pretransfer' editing and involves the hydrolysis of activated Val-AMP. The other activity is designated 'posttransfer' editing and involves deacylation of mischarged Val-tRNA(Ile). In Burkholderia orbicola (strain MC0-3), this protein is Isoleucine--tRNA ligase.